Here is a 105-residue protein sequence, read N- to C-terminus: Small ribosomal subunit protein uS10c (105 aa).

Belongs to the universal ribosomal protein uS10 family. As to quaternary structure, part of the 30S ribosomal subunit.

It is found in the plastid. It localises to the chloroplast. Functionally, involved in the binding of tRNA to the ribosomes. In Pyropia yezoensis (Susabi-nori), this protein is Small ribosomal subunit protein uS10c.